Reading from the N-terminus, the 397-residue chain is Lysophospholipid transporter LplT (397 aa).

11 helical membrane-spanning segments follow: residues 16–36, 53–73, 91–111, 139–159, 164–184, 227–247, 253–273, 281–301, 305–325, 352–372, and 373–393; these read MLAVICAQFLSAFGDNALLFA, VLQMLFVGAYILFAPFVGQFA, LGAGCICFGVNPFIGYTLVGI, LMESSTIAAILLGSMAGGILA, LAALIVCALVYGGAVVANLWI, LFWGAGVTLRFLLVIWVPVAL, AMPTYLNAMVAVGIVLGAGAA, TVSRCMPAGILIGIAVIAFAV, LLPAFGLLLLLGVFGGFFIVP, NVAMLLMLGLYSLAVSVGVPP, and VAVGIGFGAVFAVAIAALWVW.

Belongs to the major facilitator superfamily. LplT (TC 2.A.1.42) family.

The protein resides in the cell inner membrane. Catalyzes the facilitated diffusion of 2-acyl-glycero-3-phosphoethanolamine (2-acyl-GPE) into the cell. This Klebsiella pneumoniae subsp. pneumoniae (strain ATCC 700721 / MGH 78578) protein is Lysophospholipid transporter LplT.